Consider the following 262-residue polypeptide: Indole-3-glycerol phosphate synthase (262 aa).

It belongs to the TrpC family.

The catalysed reaction is 1-(2-carboxyphenylamino)-1-deoxy-D-ribulose 5-phosphate + H(+) = (1S,2R)-1-C-(indol-3-yl)glycerol 3-phosphate + CO2 + H2O. It functions in the pathway amino-acid biosynthesis; L-tryptophan biosynthesis; L-tryptophan from chorismate: step 4/5. This chain is Indole-3-glycerol phosphate synthase, found in Leuconostoc mesenteroides subsp. mesenteroides (strain ATCC 8293 / DSM 20343 / BCRC 11652 / CCM 1803 / JCM 6124 / NCDO 523 / NBRC 100496 / NCIMB 8023 / NCTC 12954 / NRRL B-1118 / 37Y).